Here is an 821-residue protein sequence, read N- to C-terminus: TORTIFOLIA1-like protein 1 (821 aa).

HEAT repeat units lie at residues 69–110 (PDSP…SYTD), 114–151 (SQLA…QFLK), 163–201 (SSLV…SATE), 205–242 (AAFQ…VGAI), and 245–282 (QSLE…HSSS). Position 406 is a phosphoserine (Ser-406). Disordered stretches follow at residues 416-437 (PSRQ…NTSV) and 553-610 (MSIQ…RAWD). A coiled-coil region spans residues 501–554 (PPLQRQLLHLERQQTHIMNMLQDFMGGSHDGMISLENRVRGLERIVEEMSREMS). Residues 579–590 (YGPSSRNTQTST) show a composition bias toward polar residues.

Expressed at low levels in roots, hypocotyls, stems, flowers, siliques, cotyledons, and leaves. Particularly present in hydathodes of cotyledons and root hairs.

It is found in the cytoplasm. Its subcellular location is the cytoskeleton. Plant-specific microtubule-associated protein (MAP) that regulates the orientation of cortical microtubules and the direction of organ growth. In Arabidopsis thaliana (Mouse-ear cress), this protein is TORTIFOLIA1-like protein 1.